The chain runs to 407 residues: Lysosome-associated membrane glycoprotein 1 (407 aa).

A signal peptide spans 1–21 (MAAPGARRPLLLLLLAGLAHS). The interval 22–189 (APALFEVKDN…SKEETRCPQD (168 aa)) is first lumenal domain. Over 22-371 (APALFEVKDN…VEECVQDGNN (350 aa)) the chain is Lumenal. 10 N-linked (GlcNAc...) asparagine glycosylation sites follow: asparagine 32, asparagine 59, asparagine 71, asparagine 79, asparagine 102, asparagine 116, asparagine 125, asparagine 145, asparagine 160, and asparagine 178. Cysteine 36 and cysteine 75 are disulfide-bonded. Cysteine 150 and cysteine 186 form a disulfide bridge. Positions 180-211 (SKEETRCPQDQPSPTTGPPSPSPPLVPTNPSV) are disordered. Positions 190-219 (QPSPTTGPPSPSPPLVPTNPSVSKYNVTGD) are hinge. The span at 194–206 (TTGPPSPSPPLVP) shows a compositional bias: pro residues. Residues asparagine 215, asparagine 220, asparagine 233, asparagine 241, asparagine 271, asparagine 283, asparagine 297, and asparagine 312 are each glycosylated (N-linked (GlcNAc...) asparagine). The interval 220–371 (NGTCLLASMA…VEECVQDGNN (152 aa)) is second lumenal domain. A disulfide bridge links cysteine 223 with cysteine 260. Cysteine 328 and cysteine 365 are joined by a disulfide. A helical transmembrane segment spans residues 372–395 (MLIPIAVGGALAGLVLIVLIAYLI). Topologically, residues 396–407 (GRKRSHAGYQTI) are cytoplasmic.

The protein belongs to the LAMP family. As to quaternary structure, interacts with ABCB9; this interaction strongly stabilizes ABCB9 and protects ABCB9 against lysosomal degradation. Interacts with FURIN. Interacts with TMEM175; inhibiting the proton channel activity of TMEM175. Post-translationally, O- and N-glycosylated; some of the N-glycans attached to LAMP-1 are polylactosaminoglycans.

Its subcellular location is the lysosome membrane. The protein localises to the endosome membrane. It localises to the late endosome membrane. It is found in the cell membrane. The protein resides in the cytolytic granule membrane. In terms of biological role, lysosomal membrane glycoprotein which plays an important role in lysosome biogenesis, lysosomal pH regulation, autophagy and cholesterol homeostasis. Acts as an important regulator of lysosomal lumen pH regulation by acting as a direct inhibitor of the proton channel TMEM175, facilitating lysosomal acidification for optimal hydrolase activity. Also plays an important role in NK-cells cytotoxicity. Mechanistically, participates in cytotoxic granule movement to the cell surface and perforin trafficking to the lytic granule. In addition, protects NK-cells from degranulation-associated damage induced by their own cytotoxic granule content. Presents carbohydrate ligands to selectins. The polypeptide is Lysosome-associated membrane glycoprotein 1 (Lamp1) (Rattus norvegicus (Rat)).